The primary structure comprises 51 residues: Sperm protamine P1 (51 aa).

Belongs to the protamine P1 family. As to expression, testis.

It is found in the nucleus. The protein localises to the chromosome. Functionally, protamines substitute for histones in the chromatin of sperm during the haploid phase of spermatogenesis. They compact sperm DNA into a highly condensed, stable and inactive complex. The polypeptide is Sperm protamine P1 (PRM1) (Trachypithecus cristatus (Silvered leaf-monkey)).